We begin with the raw amino-acid sequence, 290 residues long: Ribosomal RNA small subunit methyltransferase A (290 aa).

The S-adenosyl-L-methionine site is built by N28, L30, G55, E76, D102, and N126.

It belongs to the class I-like SAM-binding methyltransferase superfamily. rRNA adenine N(6)-methyltransferase family. RsmA subfamily.

It localises to the cytoplasm. It carries out the reaction adenosine(1518)/adenosine(1519) in 16S rRNA + 4 S-adenosyl-L-methionine = N(6)-dimethyladenosine(1518)/N(6)-dimethyladenosine(1519) in 16S rRNA + 4 S-adenosyl-L-homocysteine + 4 H(+). Specifically dimethylates two adjacent adenosines (A1518 and A1519) in the loop of a conserved hairpin near the 3'-end of 16S rRNA in the 30S particle. May play a critical role in biogenesis of 30S subunits. This Lachnoclostridium phytofermentans (strain ATCC 700394 / DSM 18823 / ISDg) (Clostridium phytofermentans) protein is Ribosomal RNA small subunit methyltransferase A.